The sequence spans 248 residues: uncharacterized protein (248 aa).

An N-terminal signal peptide occupies residues 1 to 23 (MLKKIVIGVTATAAFGIGAGALA).

It is found in the cell outer membrane. This is an uncharacterized protein from Coxiella burnetii (strain RSA 493 / Nine Mile phase I).